The chain runs to 164 residues: Aspartate carbamoyltransferase regulatory chain (164 aa).

Residues C116, C121, C146, and C149 each contribute to the Zn(2+) site.

This sequence belongs to the PyrI family. Contains catalytic and regulatory chains. The cofactor is Zn(2+).

Its function is as follows. Involved in allosteric regulation of aspartate carbamoyltransferase. This chain is Aspartate carbamoyltransferase regulatory chain, found in Staphylothermus marinus (strain ATCC 43588 / DSM 3639 / JCM 9404 / F1).